Reading from the N-terminus, the 436-residue chain is Methionine aminopeptidase 2 (436 aa).

The tract at residues 1-61 (MSEIQPKTEV…KKKKAAPVAS (61 aa)) is disordered. The segment covering 16–26 (EEEEESDDEED) has biased composition (acidic residues). Residues 44-56 (KKKKKKNKKKKKA) show a composition bias toward basic residues. A substrate-binding site is contributed by His-191. The a divalent metal cation site is built by Asp-211, Asp-222, and His-291. Position 299 (His-299) interacts with substrate. 2 residues coordinate a divalent metal cation: Glu-324 and Glu-417.

It belongs to the peptidase M24A family. Methionine aminopeptidase eukaryotic type 2 subfamily. It depends on Co(2+) as a cofactor. Zn(2+) serves as cofactor. Mn(2+) is required as a cofactor. Requires Fe(2+) as cofactor.

It is found in the cytoplasm. It catalyses the reaction Release of N-terminal amino acids, preferentially methionine, from peptides and arylamides.. Its function is as follows. Cotranslationally removes the N-terminal methionine from nascent proteins. The N-terminal methionine is often cleaved when the second residue in the primary sequence is small and uncharged (Met-Ala-, Cys, Gly, Pro, Ser, Thr, or Val). This is Methionine aminopeptidase 2 (metap2) from Dictyostelium discoideum (Social amoeba).